Consider the following 442-residue polypeptide: Cation channel sperm-associated protein 4 (442 aa).

At 1–66 (MSEKHKWWQQ…TQMYIKQLLR (66 aa)) the chain is on the cytoplasmic side. The chain crosses the membrane as a helical span at residues 67–88 (HPAFQLLLAFLLLSNAITIALR). Over 89-98 (TNSYLGQKHY) the chain is Extracellular. The chain crosses the membrane as a helical span at residues 99 to 125 (ELFSTIDDIVLTILICEVLLGWLNGFW). Topologically, residues 126 to 129 (IFWK) are cytoplasmic. The chain crosses the membrane as a helical span at residues 130–153 (DGWNILNFAIVFILFMGFFIKQLD). The Extracellular portion of the chain corresponds to 154 to 156 (MVA). Residues 157-175 (ITYPLRVLRLVHVCMAVEP) traverse the membrane as a helical segment. At 176–188 (LARIIKVILQSMP) the chain is on the cytoplasmic side. Residues 189–212 (DLANVMALILFFMLVFSVFGVTLF) form a helical membrane-spanning segment. Residues 213–222 (GAFVPKHFQN) are Extracellular-facing. An intramembrane region (helical; Pore-forming) is located at residues 223–234 (MGVALYTLFICI). At 235–255 (TQDGWLDIYTDFQMDEREYAM) the chain is on the extracellular side. The chain crosses the membrane as a helical span at residues 256-283 (EVGGAIYFAVFITLGAFIGLNLFVVVVT). The Cytoplasmic segment spans residues 284 to 442 (TNLEQMMKTG…NMVNKHKFSH (159 aa)).

Belongs to the cation channel sperm-associated (TC 1.A.1.19) family. Component of the CatSper complex or CatSpermasome composed of the core pore-forming members CATSPER1, CATSPER2, CATSPER3 and CATSPER4 as well as auxiliary members CATSPERB, CATSPERG2, CATSPERD, CATSPERE, CATSPERZ, C2CD6/CATSPERT, SLCO6C1, TMEM249, TMEM262 and EFCAB9. HSPA1 may be an additional auxiliary complex member. The core complex members CATSPER1, CATSPER2, CATSPER3 and CATSPER4 form a heterotetrameric channel. The auxiliary CATSPERB, CATSPERG2, CATSPERD and CATSPERE subunits form a pavilion-like structure over the pore which stabilizes the complex through interactions with CATSPER4, CATSPER3, CATSPER1 and CATSPER2 respectively. SLCO6C1 interacts with CATSPERE and TMEM262/CATSPERH interacts with CATSPERB, further stabilizing the complex. C2CD6/CATSPERT interacts at least with CATSPERD and is required for targeting the CatSper complex in the flagellar membrane. In terms of tissue distribution, testis-specific.

It is found in the cell projection. The protein localises to the cilium. The protein resides in the flagellum membrane. It carries out the reaction Ca(2+)(in) = Ca(2+)(out). With respect to regulation, in contrast to the human ortholog, not activated by progesterone. Activated by intracellular alkalinization. Its function is as follows. Pore-forming subunit of the CatSper complex, a sperm-specific voltage-gated calcium channel that plays a central role in sperm cell hyperactivation. Controls calcium entry to mediate the hyperactivated motility, a step needed for sperm motility which is essential late in the preparation of sperm for fertilization. The protein is Cation channel sperm-associated protein 4 (Catsper4) of Mus musculus (Mouse).